The following is a 398-amino-acid chain: MSDEGSKRGSRADSLEAEPPLPPPPPPPPPGESSLVPTSPRYRPPLPAPLERIVGSGEPPVELAPRRKGEPLPPLPPSRLPGDQEVSAAGDSCEGPRRLPEVKLPEAAAGKGSPAEPEAGACREGERRGTGDQPETRSVYSSRSSSSGGSGDQRSGHQHQHHQPICKICFQGAEQGELLNPCRCDGSVRYTHQLCLLKWISERGSWTCELCCYRYHVTAIKMKQPCQWQSISITLVEKVQMIAVILGSLFLIASVTWLLWSAFSPYAVWQRKDILFQICYGMYGFMDLVCIGLIVHEGAAVYRVFKRWRAVNLHWDVLNYDKATDIEESSRGESSTSRTLWLPLSALRNRNLVHPTQLTSPRFQCGYVLLHLFNRMRAHEDVSEDNGSGEVVMRVTSV.

Over residues 1–14 (MSDEGSKRGSRADS) the composition is skewed to basic and acidic residues. The tract at residues 1-158 (MSDEGSKRGS…GSGDQRSGHQ (158 aa)) is disordered. Residues 19 to 31 (PPLPPPPPPPPPG) show a composition bias toward pro residues. 2 stretches are compositionally biased toward basic and acidic residues: residues 94–104 (EGPRRLPEVKL) and 121–130 (ACREGERRGT). The RING-CH-type zinc-finger motif lies at 158–218 (QHQHHQPICK…ELCCYRYHVT (61 aa)). 8 residues coordinate Zn(2+): Cys166, Cys169, Cys182, Cys184, His192, Cys195, Cys208, and Cys211. Transmembrane regions (helical) follow at residues 241-261 (MIAV…LLWS) and 274-294 (ILFQ…IGLI). A YXXL motif motif is present at residues 367–370 (YVLL). Residues 395 to 398 (VTSV) carry the PDZ-binding motif.

As to quaternary structure, interacts (YXXL motif) with AP1M1. Interacts (via PDZ-binding motif) with LIN7A. Interacts with unidentified fucose glycoproteins. In terms of tissue distribution, predominantly expressed in testis. Present in early developing spermatids. Not present in spermatogonia, spermatocytes or somatic cells (i.e. peritubular, Leydig, and Sertoli cells). Present in early round spermatids at step 4, remains until step 11, then it decreases at steps 12-15, and diminishes after step 16 (at protein level). Also expressed at lower level in brain.

It is found in the cytoplasmic vesicle membrane. It catalyses the reaction S-ubiquitinyl-[E2 ubiquitin-conjugating enzyme]-L-cysteine + [acceptor protein]-L-lysine = [E2 ubiquitin-conjugating enzyme]-L-cysteine + N(6)-ubiquitinyl-[acceptor protein]-L-lysine.. The protein operates within protein modification; protein ubiquitination. Functionally, E3 ubiquitin-protein ligase that mediates polyubiquitination of CD4. E3 ubiquitin ligases accept ubiquitin from an E2 ubiquitin-conjugating enzyme in the form of a thioester and then directly transfer the ubiquitin to targeted substrates. May play a role in ubuquitin-dependent protein sorting in developmenting spermatids. This is E3 ubiquitin-protein ligase MARCHF11 (Marchf11) from Rattus norvegicus (Rat).